The sequence spans 359 residues: Peptide chain release factor 1 (359 aa).

Residue Gln-233 is modified to N5-methylglutamine.

This sequence belongs to the prokaryotic/mitochondrial release factor family. Methylated by PrmC. Methylation increases the termination efficiency of RF1.

The protein resides in the cytoplasm. Functionally, peptide chain release factor 1 directs the termination of translation in response to the peptide chain termination codons UAG and UAA. This Orientia tsutsugamushi (strain Ikeda) (Rickettsia tsutsugamushi) protein is Peptide chain release factor 1.